Reading from the N-terminus, the 368-residue chain is Trans-enoyl reductase TwmE (368 aa).

49 to 52 (SDYK) is an NADP(+) binding site. 135–142 (FKAATLGT) is a binding site for substrate. NADP(+) is bound by residues 204-207 (SPRS), Tyr222, and 269-270 (LE). 290-294 (SAELY) contacts substrate. NADP(+) is bound at residue 360-361 (HP).

The protein belongs to the zinc-containing alcohol dehydrogenase family. Monomer.

The protein operates within secondary metabolite biosynthesis. Trans-enoyl reductase; part of the gene cluster that mediates the biosynthesis of wortmanamides A and B, reduced long-chain polyketides amidated with a specific omega-amino acid, 5-aminopentanoic acid (5PA). The PKS modules of TwmB are involved in the synthesis of the polyketide backbone, whereas the non-canonical C domain of TwmB is a bonafide condensation domain that specifically selects 5PA and catalyzes amidation to release polyketide chain. The C domain clearly prefers C16 and C18 fatty acyl substrates, which is consistent with simultaneous formation of both octaketide and nonaketide acyl amides wortmanamides A and B. Because TwmB lacks a designated enoylreductase (ER) domain, the required activity is provided the enoyl reductase TwmE. The roles of the remaining enzymes have still to be clarified. The polypeptide is Trans-enoyl reductase TwmE (Talaromyces wortmannii (Penicillium wortmannii)).